Here is a 468-residue protein sequence, read N- to C-terminus: TFIIA-alpha and beta-like factor (468 aa).

2 disordered regions span residues 215-236 (DRRL…LSLP) and 379-416 (DSVS…SEQD). Residues 380-391 (SVSNEDSTANSS) are compositionally biased toward polar residues. Over residues 401–416 (PEEDPLNSGDDVSEQD) the composition is skewed to acidic residues.

This sequence belongs to the TFIIA subunit 1 family. As to expression, testis specific. Expressed in pachytene spermatocytes and haploid spermatids.

The protein localises to the nucleus. May function as a testis specific transcription factor. Binds DNA in conjunction with GTF2A2 and TBP (the TATA-binding protein) and together with GTF2A2, allows mRNA transcription. The chain is TFIIA-alpha and beta-like factor (Gtf2a1l) from Mus musculus (Mouse).